The primary structure comprises 307 residues: Aspartate carbamoyltransferase catalytic subunit (307 aa).

Residues Arg-59 and Thr-60 each contribute to the carbamoyl phosphate site. Lys-87 lines the L-aspartate pocket. Carbamoyl phosphate is bound by residues Arg-109, His-137, and Gln-140. 2 residues coordinate L-aspartate: Arg-173 and Arg-223. Residues Gly-266 and Pro-267 each contribute to the carbamoyl phosphate site.

This sequence belongs to the aspartate/ornithine carbamoyltransferase superfamily. ATCase family. As to quaternary structure, heterododecamer (2C3:3R2) of six catalytic PyrB chains organized as two trimers (C3), and six regulatory PyrI chains organized as three dimers (R2).

The catalysed reaction is carbamoyl phosphate + L-aspartate = N-carbamoyl-L-aspartate + phosphate + H(+). The protein operates within pyrimidine metabolism; UMP biosynthesis via de novo pathway; (S)-dihydroorotate from bicarbonate: step 2/3. Functionally, catalyzes the condensation of carbamoyl phosphate and aspartate to form carbamoyl aspartate and inorganic phosphate, the committed step in the de novo pyrimidine nucleotide biosynthesis pathway. The sequence is that of Aspartate carbamoyltransferase catalytic subunit from Helicobacter pylori (strain Shi470).